The following is a 417-amino-acid chain: Gamma-glutamyl phosphate reductase (417 aa).

Belongs to the gamma-glutamyl phosphate reductase family.

The protein resides in the cytoplasm. It carries out the reaction L-glutamate 5-semialdehyde + phosphate + NADP(+) = L-glutamyl 5-phosphate + NADPH + H(+). It functions in the pathway amino-acid biosynthesis; L-proline biosynthesis; L-glutamate 5-semialdehyde from L-glutamate: step 2/2. Functionally, catalyzes the NADPH-dependent reduction of L-glutamate 5-phosphate into L-glutamate 5-semialdehyde and phosphate. The product spontaneously undergoes cyclization to form 1-pyrroline-5-carboxylate. The polypeptide is Gamma-glutamyl phosphate reductase (Chlorobium phaeobacteroides (strain BS1)).